The primary structure comprises 211 residues: Endo-1,4-beta-xylanase A (211 aa).

Residues 1–27 (MKVTAAFAGLLVTAFAAPVPEPVLVSR) form the signal peptide. Residues 28–210 (SAGINYVQNY…GAGSASVTIS (183 aa)) enclose the GH11 domain. Catalysis depends on glutamate 106, which acts as the Nucleophile. Residues cysteine 119 and cysteine 138 are joined by a disulfide bond. Glutamate 197 functions as the Proton donor in the catalytic mechanism.

It belongs to the glycosyl hydrolase 11 (cellulase G) family.

The protein resides in the secreted. The catalysed reaction is Endohydrolysis of (1-&gt;4)-beta-D-xylosidic linkages in xylans.. Its pathway is glycan degradation; xylan degradation. Functionally, endo-1,4-beta-xylanase involved in the hydrolysis of xylan, a major structural heterogeneous polysaccharide found in plant biomass representing the second most abundant polysaccharide in the biosphere, after cellulose. The polypeptide is Endo-1,4-beta-xylanase A (xynA) (Aspergillus niger).